A 342-amino-acid chain; its full sequence is Isopentenyl-diphosphate delta-isomerase (342 aa).

12 to 13 is a binding site for substrate; that stretch reads RK. Residues 71–73, S101, and N129 each bind FMN; that span reads AMT. 101 to 103 provides a ligand contact to substrate; sequence SQR. Substrate is bound at residue Q163. Mg(2+) is bound at residue E164. FMN-binding positions include K195, T225, 272–274, and 293–294; these read GIR and AR.

The protein belongs to the IPP isomerase type 2 family. Homooctamer. Dimer of tetramers. The cofactor is FMN. NADPH is required as a cofactor. Mg(2+) serves as cofactor.

The protein localises to the cytoplasm. The enzyme catalyses isopentenyl diphosphate = dimethylallyl diphosphate. In terms of biological role, involved in the biosynthesis of isoprenoids. Catalyzes the 1,3-allylic rearrangement of the homoallylic substrate isopentenyl (IPP) to its allylic isomer, dimethylallyl diphosphate (DMAPP). The protein is Isopentenyl-diphosphate delta-isomerase of Mycolicibacterium vanbaalenii (strain DSM 7251 / JCM 13017 / BCRC 16820 / KCTC 9966 / NRRL B-24157 / PYR-1) (Mycobacterium vanbaalenii).